A 514-amino-acid polypeptide reads, in one-letter code: Major facilitator superfamily domain-containing protein 4A (514 aa).

5 helical membrane passes run 19–39 (LTYW…GPTL), 53–73 (ISWV…LGGV), 82–102 (LWAL…IPFC), 107–127 (VLAS…TVAN), and 139–159 (AVFL…SPLI). Residue N177 is glycosylated (N-linked (GlcNAc...) asparagine). Helical transmembrane passes span 221 to 241 (YAFW…LMLL), 307 to 327 (FFAI…LTGA), 347 to 367 (VAGY…LLSI), 376 to 396 (ATMV…LLIF), 400 to 420 (VVFL…TFPS), 438 to 458 (VLVT…GSIF), and 466 to 486 (FLVC…LLLF).

This sequence belongs to the major facilitator superfamily.

The protein resides in the membrane. The sequence is that of Major facilitator superfamily domain-containing protein 4A from Homo sapiens (Human).